A 262-amino-acid chain; its full sequence is Shikimate dehydrogenase (NADP(+)) (262 aa).

Shikimate is bound by residues 13–15 and T59; that span reads SLS. K63 functions as the Proton acceptor in the catalytic mechanism. D75 contributes to the NADP(+) binding site. The shikimate site is built by N84 and D99. Residues 122–126, 144–149, and M205 contribute to the NADP(+) site; these read GAGGA and NRTLEK. Residue Y207 participates in shikimate binding. Position 228 (G228) interacts with NADP(+).

This sequence belongs to the shikimate dehydrogenase family. In terms of assembly, homodimer.

The catalysed reaction is shikimate + NADP(+) = 3-dehydroshikimate + NADPH + H(+). It participates in metabolic intermediate biosynthesis; chorismate biosynthesis; chorismate from D-erythrose 4-phosphate and phosphoenolpyruvate: step 4/7. Functionally, involved in the biosynthesis of the chorismate, which leads to the biosynthesis of aromatic amino acids. Catalyzes the reversible NADPH linked reduction of 3-dehydroshikimate (DHSA) to yield shikimate (SA). The chain is Shikimate dehydrogenase (NADP(+)) from Ignicoccus hospitalis (strain KIN4/I / DSM 18386 / JCM 14125).